The sequence spans 120 residues: UPF0342 protein LAF_1331 (120 aa).

Belongs to the UPF0342 family.

The sequence is that of UPF0342 protein LAF_1331 from Limosilactobacillus fermentum (strain NBRC 3956 / LMG 18251) (Lactobacillus fermentum).